A 298-amino-acid polypeptide reads, in one-letter code: Putative S-adenosyl-L-methionine-dependent methyltransferase MSMEG_1480/MSMEI_1444 (298 aa).

S-adenosyl-L-methionine contacts are provided by residues Asp127 and 156-157; that span reads DL.

The protein belongs to the UPF0677 family.

Exhibits S-adenosyl-L-methionine-dependent methyltransferase activity. In Mycolicibacterium smegmatis (strain ATCC 700084 / mc(2)155) (Mycobacterium smegmatis), this protein is Putative S-adenosyl-L-methionine-dependent methyltransferase MSMEG_1480/MSMEI_1444.